We begin with the raw amino-acid sequence, 294 residues long: Glycine--tRNA ligase alpha subunit (294 aa).

Belongs to the class-II aminoacyl-tRNA synthetase family. Tetramer of two alpha and two beta subunits.

It is found in the cytoplasm. The catalysed reaction is tRNA(Gly) + glycine + ATP = glycyl-tRNA(Gly) + AMP + diphosphate. The protein is Glycine--tRNA ligase alpha subunit of Oleidesulfovibrio alaskensis (strain ATCC BAA-1058 / DSM 17464 / G20) (Desulfovibrio alaskensis).